The chain runs to 379 residues: UDP-N-acetylglucosamine--N-acetylmuramyl-(pentapeptide) pyrophosphoryl-undecaprenol N-acetylglucosamine transferase (379 aa).

Residues 10–12 (TGG), asparagine 124, and arginine 165 contribute to the UDP-N-acetyl-alpha-D-glucosamine site. The tract at residues 174-195 (TRDQGPGIRDQEKHMTDSTGPA) is disordered. Positions 211, 266, and 311 each coordinate UDP-N-acetyl-alpha-D-glucosamine.

The protein belongs to the glycosyltransferase 28 family. MurG subfamily.

Its subcellular location is the cell inner membrane. The enzyme catalyses di-trans,octa-cis-undecaprenyl diphospho-N-acetyl-alpha-D-muramoyl-L-alanyl-D-glutamyl-meso-2,6-diaminopimeloyl-D-alanyl-D-alanine + UDP-N-acetyl-alpha-D-glucosamine = di-trans,octa-cis-undecaprenyl diphospho-[N-acetyl-alpha-D-glucosaminyl-(1-&gt;4)]-N-acetyl-alpha-D-muramoyl-L-alanyl-D-glutamyl-meso-2,6-diaminopimeloyl-D-alanyl-D-alanine + UDP + H(+). It functions in the pathway cell wall biogenesis; peptidoglycan biosynthesis. Cell wall formation. Catalyzes the transfer of a GlcNAc subunit on undecaprenyl-pyrophosphoryl-MurNAc-pentapeptide (lipid intermediate I) to form undecaprenyl-pyrophosphoryl-MurNAc-(pentapeptide)GlcNAc (lipid intermediate II). The sequence is that of UDP-N-acetylglucosamine--N-acetylmuramyl-(pentapeptide) pyrophosphoryl-undecaprenol N-acetylglucosamine transferase from Pelobacter propionicus (strain DSM 2379 / NBRC 103807 / OttBd1).